The chain runs to 398 residues: Ornithine aminotransferase (398 aa).

Lys-256 is modified (N6-(pyridoxal phosphate)lysine).

The protein belongs to the class-III pyridoxal-phosphate-dependent aminotransferase family. OAT subfamily. Requires pyridoxal 5'-phosphate as cofactor.

It is found in the cytoplasm. The catalysed reaction is a 2-oxocarboxylate + L-ornithine = L-glutamate 5-semialdehyde + an L-alpha-amino acid. The protein operates within amino-acid biosynthesis; L-proline biosynthesis; L-glutamate 5-semialdehyde from L-ornithine: step 1/1. In terms of biological role, catalyzes the interconversion of ornithine to glutamate semialdehyde. This Halalkalibacterium halodurans (strain ATCC BAA-125 / DSM 18197 / FERM 7344 / JCM 9153 / C-125) (Bacillus halodurans) protein is Ornithine aminotransferase.